We begin with the raw amino-acid sequence, 286 residues long: Thymidylate synthase (286 aa).

Position 140 to 141 (140 to 141) interacts with dUMP; the sequence is RR. C161 (nucleophile) is an active-site residue. DUMP-binding positions include 185–188, N196, and 226–228; these read RSND and HIY. D188 serves as a coordination point for (6R)-5,10-methylene-5,6,7,8-tetrahydrofolate. Residue A285 coordinates (6R)-5,10-methylene-5,6,7,8-tetrahydrofolate.

It belongs to the thymidylate synthase family. Bacterial-type ThyA subfamily. In terms of assembly, homodimer.

The protein localises to the cytoplasm. It carries out the reaction dUMP + (6R)-5,10-methylene-5,6,7,8-tetrahydrofolate = 7,8-dihydrofolate + dTMP. Its pathway is pyrimidine metabolism; dTTP biosynthesis. Functionally, catalyzes the reductive methylation of 2'-deoxyuridine-5'-monophosphate (dUMP) to 2'-deoxythymidine-5'-monophosphate (dTMP) while utilizing 5,10-methylenetetrahydrofolate (mTHF) as the methyl donor and reductant in the reaction, yielding dihydrofolate (DHF) as a by-product. This enzymatic reaction provides an intracellular de novo source of dTMP, an essential precursor for DNA biosynthesis. This is Thymidylate synthase from Streptococcus thermophilus (strain CNRZ 1066).